The primary structure comprises 467 residues: Cysteine--tRNA ligase (467 aa).

C28 contacts Zn(2+). The 'HIGH' region signature appears at 30 to 40 (MTVYDYCHLGH). 3 residues coordinate Zn(2+): C209, H234, and E238. A 'KMSKS' region motif is present at residues 266–270 (KMSKS). ATP is bound at residue K269.

It belongs to the class-I aminoacyl-tRNA synthetase family. In terms of assembly, monomer. Requires Zn(2+) as cofactor.

The protein localises to the cytoplasm. The enzyme catalyses tRNA(Cys) + L-cysteine + ATP = L-cysteinyl-tRNA(Cys) + AMP + diphosphate. In Hahella chejuensis (strain KCTC 2396), this protein is Cysteine--tRNA ligase.